The primary structure comprises 126 residues: uncharacterized protein (126 aa).

Positions 8–106 constitute an HTH hxlR-type domain; sequence ISVEATLEVI…WGANHINRVY (99 aa).

This is an uncharacterized protein from Bacillus subtilis (strain 168).